Consider the following 264-residue polypeptide: Hydroxyethylthiazole kinase (264 aa).

Met-55 provides a ligand contact to substrate. ATP contacts are provided by Arg-130 and Ser-176. Gly-203 contacts substrate.

Belongs to the Thz kinase family. The cofactor is Mg(2+).

It carries out the reaction 5-(2-hydroxyethyl)-4-methylthiazole + ATP = 4-methyl-5-(2-phosphooxyethyl)-thiazole + ADP + H(+). Its pathway is cofactor biosynthesis; thiamine diphosphate biosynthesis; 4-methyl-5-(2-phosphoethyl)-thiazole from 5-(2-hydroxyethyl)-4-methylthiazole: step 1/1. Catalyzes the phosphorylation of the hydroxyl group of 4-methyl-5-beta-hydroxyethylthiazole (THZ). This is Hydroxyethylthiazole kinase from Leptospira borgpetersenii serovar Hardjo-bovis (strain JB197).